Consider the following 446-residue polypeptide: Tryptophan synthase beta chain 2 (446 aa).

The residue at position 110 (Lys110) is an N6-(pyridoxal phosphate)lysine.

Belongs to the TrpB family. In terms of assembly, tetramer of two alpha and two beta chains. The cofactor is pyridoxal 5'-phosphate.

The enzyme catalyses (1S,2R)-1-C-(indol-3-yl)glycerol 3-phosphate + L-serine = D-glyceraldehyde 3-phosphate + L-tryptophan + H2O. It participates in amino-acid biosynthesis; L-tryptophan biosynthesis; L-tryptophan from chorismate: step 5/5. Its function is as follows. The beta subunit is responsible for the synthesis of L-tryptophan from indole and L-serine. In Pyrococcus furiosus (strain ATCC 43587 / DSM 3638 / JCM 8422 / Vc1), this protein is Tryptophan synthase beta chain 2 (trpB2).